The primary structure comprises 191 residues: Leucyl/phenylalanyl-tRNA--protein transferase (191 aa).

The protein belongs to the L/F-transferase family.

It is found in the cytoplasm. The catalysed reaction is N-terminal L-lysyl-[protein] + L-leucyl-tRNA(Leu) = N-terminal L-leucyl-L-lysyl-[protein] + tRNA(Leu) + H(+). It catalyses the reaction N-terminal L-arginyl-[protein] + L-leucyl-tRNA(Leu) = N-terminal L-leucyl-L-arginyl-[protein] + tRNA(Leu) + H(+). It carries out the reaction L-phenylalanyl-tRNA(Phe) + an N-terminal L-alpha-aminoacyl-[protein] = an N-terminal L-phenylalanyl-L-alpha-aminoacyl-[protein] + tRNA(Phe). In terms of biological role, functions in the N-end rule pathway of protein degradation where it conjugates Leu, Phe and, less efficiently, Met from aminoacyl-tRNAs to the N-termini of proteins containing an N-terminal arginine or lysine. In Herpetosiphon aurantiacus (strain ATCC 23779 / DSM 785 / 114-95), this protein is Leucyl/phenylalanyl-tRNA--protein transferase.